The chain runs to 125 residues: Prefoldin subunit beta (125 aa).

It belongs to the prefoldin subunit beta family. Heterohexamer of two alpha and four beta subunits.

It localises to the cytoplasm. Functionally, molecular chaperone capable of stabilizing a range of proteins. Seems to fulfill an ATP-independent, HSP70-like function in archaeal de novo protein folding. This Sulfolobus acidocaldarius (strain ATCC 33909 / DSM 639 / JCM 8929 / NBRC 15157 / NCIMB 11770) protein is Prefoldin subunit beta.